We begin with the raw amino-acid sequence, 67 residues long: Large ribosomal subunit protein bL31 (67 aa).

Residues Cys16, Cys18, Cys37, and Cys40 each coordinate Zn(2+).

This sequence belongs to the bacterial ribosomal protein bL31 family. Type A subfamily. As to quaternary structure, part of the 50S ribosomal subunit. Requires Zn(2+) as cofactor.

Its function is as follows. Binds the 23S rRNA. This is Large ribosomal subunit protein bL31 from Methylococcus capsulatus (strain ATCC 33009 / NCIMB 11132 / Bath).